Here is a 185-residue protein sequence, read N- to C-terminus: Peptidyl-tRNA hydrolase (185 aa).

Y14 serves as a coordination point for tRNA. The active-site Proton acceptor is the H19. Positions 64, 66, and 112 each coordinate tRNA.

This sequence belongs to the PTH family. As to quaternary structure, monomer.

It localises to the cytoplasm. The catalysed reaction is an N-acyl-L-alpha-aminoacyl-tRNA + H2O = an N-acyl-L-amino acid + a tRNA + H(+). Functionally, hydrolyzes ribosome-free peptidyl-tRNAs (with 1 or more amino acids incorporated), which drop off the ribosome during protein synthesis, or as a result of ribosome stalling. In terms of biological role, catalyzes the release of premature peptidyl moieties from peptidyl-tRNA molecules trapped in stalled 50S ribosomal subunits, and thus maintains levels of free tRNAs and 50S ribosomes. The protein is Peptidyl-tRNA hydrolase of Lactobacillus delbrueckii subsp. bulgaricus (strain ATCC 11842 / DSM 20081 / BCRC 10696 / JCM 1002 / NBRC 13953 / NCIMB 11778 / NCTC 12712 / WDCM 00102 / Lb 14).